A 239-amino-acid chain; its full sequence is Pimeloyl-[acyl-carrier protein] methyl ester esterase (239 aa).

Residues Trp-20, 77–78, and 138–142 contribute to the substrate site; these read SM and FISLQ. Ser-77 functions as the Nucleophile in the catalytic mechanism. Catalysis depends on residues Asp-192 and His-220. His-220 contacts substrate.

It belongs to the AB hydrolase superfamily. Carboxylesterase BioH family. Monomer.

It localises to the cytoplasm. It catalyses the reaction 6-carboxyhexanoyl-[ACP] methyl ester + H2O = 6-carboxyhexanoyl-[ACP] + methanol + H(+). It functions in the pathway cofactor biosynthesis; biotin biosynthesis. In terms of biological role, the physiological role of BioH is to remove the methyl group introduced by BioC when the pimeloyl moiety is complete. It allows to synthesize pimeloyl-ACP via the fatty acid synthetic pathway through the hydrolysis of the ester bonds of pimeloyl-ACP esters. The chain is Pimeloyl-[acyl-carrier protein] methyl ester esterase from Legionella pneumophila (strain Corby).